The following is an 861-amino-acid chain: Leucine--tRNA ligase (861 aa).

The 'HIGH' region signature appears at 42-52; that stretch reads PYPSGRIHMGH. The short motif at 623–627 is the 'KMSKS' region element; it reads KMSKS. Residue Lys626 participates in ATP binding.

It belongs to the class-I aminoacyl-tRNA synthetase family.

The protein resides in the cytoplasm. The enzyme catalyses tRNA(Leu) + L-leucine + ATP = L-leucyl-tRNA(Leu) + AMP + diphosphate. The sequence is that of Leucine--tRNA ligase from Caulobacter sp. (strain K31).